A 352-amino-acid chain; its full sequence is Selenide, water dikinase (352 aa).

C21 is an active-site residue. ATP-binding positions include K24 and 51–53 (TND). Residue D54 participates in Mg(2+) binding. ATP contacts are provided by residues D71, D94, and 141–143 (GHS). D94 contacts Mg(2+). Residue D231 coordinates Mg(2+).

It belongs to the selenophosphate synthase 1 family. Class I subfamily. As to quaternary structure, homodimer. It depends on Mg(2+) as a cofactor.

The catalysed reaction is hydrogenselenide + ATP + H2O = selenophosphate + AMP + phosphate + 2 H(+). Synthesizes selenophosphate from selenide and ATP. The protein is Selenide, water dikinase of Myxococcus xanthus (strain DK1622).